An 81-amino-acid polypeptide reads, in one-letter code: Photosystem I iron-sulfur center (81 aa).

4Fe-4S ferredoxin-type domains lie at serine 2–tryptophan 31 and isoleucine 39–tyrosine 68. [4Fe-4S] cluster is bound by residues cysteine 11, cysteine 14, cysteine 17, cysteine 21, cysteine 48, cysteine 51, cysteine 54, and cysteine 58.

The eukaryotic PSI reaction center is composed of at least 11 subunits. [4Fe-4S] cluster is required as a cofactor.

It is found in the plastid. The protein resides in the chloroplast thylakoid membrane. The catalysed reaction is reduced [plastocyanin] + hnu + oxidized [2Fe-2S]-[ferredoxin] = oxidized [plastocyanin] + reduced [2Fe-2S]-[ferredoxin]. Its function is as follows. Apoprotein for the two 4Fe-4S centers FA and FB of photosystem I (PSI); essential for photochemical activity. FB is the terminal electron acceptor of PSI, donating electrons to ferredoxin. The C-terminus interacts with PsaA/B/D and helps assemble the protein into the PSI complex. Required for binding of PsaD and PsaE to PSI. PSI is a plastocyanin-ferredoxin oxidoreductase, converting photonic excitation into a charge separation, which transfers an electron from the donor P700 chlorophyll pair to the spectroscopically characterized acceptors A0, A1, FX, FA and FB in turn. The sequence is that of Photosystem I iron-sulfur center from Chaetosphaeridium globosum (Charophycean green alga).